A 2863-amino-acid polypeptide reads, in one-letter code: Lipopolysaccharide-responsive and beige-like anchor protein (2863 aa).

Disordered regions lie at residues 1–35, 969–1005, and 1018–1039; these read MASEDNRVPSPPPTGDDGGGGGREETPTEGGALSL, VGSQQPDTKDSPVCPHFTTNGNENSSIEKTSSLESAS, and EMKAEQENQELPDEGTLEETLT. Ala-2 carries the N-acetylalanine modification. A phosphoserine mark is found at Ser-10, Ser-979, and Ser-1003. A compositionally biased stretch (polar residues) spans 985–1005; sequence FTTNGNENSSIEKTSSLESAS. A coiled-coil region spans residues 1006 to 1053; that stretch reads NIELQTTNTSYEEMKAEQENQELPDEGTLEETLTNETRNADDLEVSSD. The span at 1024–1034 shows a compositional bias: acidic residues; the sequence is ENQELPDEGTL. 3 positions are modified to phosphoserine: Ser-1100, Ser-1135, and Ser-1139. The span at 1161–1176 shows a compositional bias: basic and acidic residues; sequence PVTEKQTDTETQDSKD. Residues 1161 to 1193 are disordered; that stretch reads PVTEKQTDTETQDSKDSGIQTMTASGSSAMSPE. Over residues 1177–1193 the composition is skewed to polar residues; it reads SGIQTMTASGSSAMSPE. A phosphoserine mark is found at Ser-1233, Ser-1247, and Ser-1261. The stretch at 1301–1343 is one WD 1 repeat; sequence STVFRIPEFNWSQMHQRLLTDLLFSIETDIQMWRSHSTKTVMD. 2 positions are modified to phosphoserine: Ser-1488 and Ser-1498. The helical transmembrane segment at 1531-1548 threads the bilayer; that stretch reads FLALAVVYFISVLMVSKY. A compositionally biased stretch (low complexity) spans 1586–1599; sequence LTTASVEESESTSS. Disordered regions lie at residues 1586–1668 and 1759–1789; these read LTTA…KATP and QASDMGGESPGSRSSNAKLPSVPTVDSVSQD. Phosphoserine is present on Ser-1605. Basic and acidic residues predominate over residues 1650–1664; the sequence is KSPETKNDRGNDLDT. Ser-1767, Ser-1770, and Ser-2064 each carry phosphoserine. The span at 1769–1789 shows a compositional bias: polar residues; that stretch reads GSRSSNAKLPSVPTVDSVSQD. A BEACH-type PH domain is found at 2073–2181; it reads NLAGPVSLST…TVKKVVNYLP (109 aa). The BEACH domain maps to 2200 to 2489; the sequence is ASPRQLFKAS…QLLIEPHPPR (290 aa). Ser-2496 is modified (phosphoserine). WD repeat units follow at residues 2591-2633, 2636-2679, 2695-2735, 2777-2816, and 2819-2858; these read DQSI…LIQV, GHWD…SGIG, GHDY…RTLE, ETDDNIRAIQLSRDGQYLLTGGDRGVVVVRQVSDLKQLFA, and GCDAGIRAMALSYDQRCIISGMASGSIVLFYNDFNRWHHE.

As to quaternary structure, interacts with TOM1 and TOLLIP. Ubiquitous.

The protein localises to the cell membrane. The protein resides in the endoplasmic reticulum membrane. It is found in the golgi apparatus. Its subcellular location is the trans-Golgi network membrane. It localises to the lysosome membrane. Its function is as follows. Involved in coupling signal transduction and vesicle trafficking to enable polarized secretion and/or membrane deposition of immune effector molecules. Involved in phagophore growth during mitophagy by regulating ATG9A trafficking to mitochondria. The chain is Lipopolysaccharide-responsive and beige-like anchor protein from Homo sapiens (Human).